The following is a 284-amino-acid chain: tRNA N(3)-cytidine methyltransferase METTL6 (284 aa).

Residues Trp45 and Tyr49 each coordinate S-adenosyl-L-methionine. 8 residues coordinate S-adenosyl-L-homocysteine: Tyr49, His61, Glu85, Gly87, Asp110, Asp136, Leu137, and Ile157. 5 residues coordinate S-adenosyl-L-methionine: Gly87, Asp110, Asp136, Leu137, and Ile157.

The protein belongs to the methyltransferase superfamily. METL family. In terms of assembly, monomer. Interacts with SARS1/SerRS; interaction is mediated via tRNA(Ser) and is required for N(3)-methylcytidine methylation.

It localises to the cytoplasm. It is found in the nucleus. It carries out the reaction cytidine(32) in tRNA(Ser) + S-adenosyl-L-methionine = N(3)-methylcytidine(32) in tRNA(Ser) + S-adenosyl-L-homocysteine + H(+). Functionally, S-adenosyl-L-methionine-dependent methyltransferase that mediates N(3)-methylcytidine modification of residue 32 of the tRNA anticodon loop of tRNA(Ser), including tRNA(Ser)(UGA) and tRNA(Ser)(GCU). Interaction with SARS1/SerRS is required for N(3)-methylcytidine methylation. The polypeptide is tRNA N(3)-cytidine methyltransferase METTL6 (Homo sapiens (Human)).